The chain runs to 1044 residues: MGSNDLNTWVSDKLMVLLGFSQTAVVQYLIAMAKQSKSPGELVRELVECGFSLSGDTRAFAEEIYARAPRKTPGVNLYQQQEAEAAMLLKKQKTFSLLEADHDEDENNVKKQSASKTGKSDKGQKRFRKKSEQLEDDDDEVVIVREDKRNVRRKVSEDEDDGTESEEERLRDQREREELEQHLRERDTARTRKLTEPKMSKKEQEEFVRRDSAVDKGDIESLRKFSWQEYMKKRKQKKVLELKDDIEDEPYLFGDEKLTEREIREFRYKREIYELIKKSTQEEDNVGEYRMPDAYDQQGSVDQEKRFAVSVQRYRDMGSAEKMNPFAEQEAWEDHQIENAALKFGAKNKEVSDNYEFVFEDQIDFIKASVLAGDNYEDEMHAKPSQDSAGKSAFHMLQEDRKALPIYTYRDQLLNAVKDHQVLIIVGETGSGKTTQIPQYLHEAGYTKLGKVGCTQPRRVAAMSVAARVAQEMGGKLGHEVGYSIRFEDCTSEKTILKYMTDGMLLRELLGEPDLGSYSVIIVDEAHERTLRTDILFGLVKDIARARPDLKLLISSATMDAEKFSDFFDQAPIFRFPGRRYPVDICFTTAPEADYMDAAITTVLTIHVKEPLGDVLVFLPGQEEIEAVEENLKHKIRGLGTKIRELIICPIYANLPSELQAKIFEPTPEGARKVVLATNIAETSLTIDGIKYVVDPGFSKMKSYNPRTGMESLLVTPISKASATQRTGRAGRTSPGKCYRLYTAFNYYNDLEDNTVPEIQRTNLASVVLSLKSLGIHNLLNFDFMDPPPSEALIKSLELLFALGALNQLGELTKAGRRMAEFPLDPMLSKMIVVSDKYKCSDEIISIAAMLSIGPSIFYRPKDKQVHADNAMKNFHVGNVGDHIAFLKIYNSWKETNYSTQWCYENYIQVRSMKRARDIRDQLEGLLERVEIDVSSNANELDSIRKSIVAGFFPHTAKLQKNGSYRTVKHPQTVHIHPASGLSQVLPRWVVYHQLVLTSKEYMRQVTELKPEWLIEIAPHYYQLKDVEDATSKKMPKTSGRAVV.

Disordered regions lie at residues 99 to 134 (EADH…SEQL) and 152 to 211 (RRKV…VRRD). A compositionally biased stretch (acidic residues) spans 157–167 (EDEDDGTESEE). Positions 168–211 (ERLRDQREREELEQHLRERDTARTRKLTEPKMSKKEQEEFVRRD) are enriched in basic and acidic residues. In terms of domain architecture, Helicase ATP-binding spans 414-577 (LNAVKDHQVL…FDQAPIFRFP (164 aa)). Residue 427–434 (GETGSGKT) participates in ATP binding. Positions 524-527 (DEAH) match the DEAH box motif. The Helicase C-terminal domain maps to 599 to 775 (AITTVLTIHV…SVVLSLKSLG (177 aa)).

The protein belongs to the DEAD box helicase family. DEAH subfamily. PRP2 sub-subfamily. In terms of tissue distribution, predominantly expressed in flowers.

The enzyme catalyses ATP + H2O = ADP + phosphate + H(+). In terms of biological role, may be involved in pre-mRNA splicing. The protein is Probable pre-mRNA-splicing factor ATP-dependent RNA helicase DEAH6 of Arabidopsis thaliana (Mouse-ear cress).